Here is a 358-residue protein sequence, read N- to C-terminus: Isopentenyl-diphosphate delta-isomerase (358 aa).

Position 12–13 (12–13) interacts with substrate; that stretch reads RK. FMN contacts are provided by residues 69 to 71, Ser99, and Asn128; that span reads AMT. Residue Gln158 participates in substrate binding. Glu159 lines the Mg(2+) pocket. Residues Lys190, Thr220, 267–269, and 288–289 each bind FMN; these read GIR and AG.

This sequence belongs to the IPP isomerase type 2 family. In terms of assembly, homooctamer. Dimer of tetramers. Requires FMN as cofactor. It depends on NADPH as a cofactor. The cofactor is Mg(2+).

The protein resides in the cytoplasm. The enzyme catalyses isopentenyl diphosphate = dimethylallyl diphosphate. Functionally, involved in the biosynthesis of isoprenoids. Catalyzes the 1,3-allylic rearrangement of the homoallylic substrate isopentenyl (IPP) to its allylic isomer, dimethylallyl diphosphate (DMAPP). This chain is Isopentenyl-diphosphate delta-isomerase, found in Listeria monocytogenes serotype 4a (strain HCC23).